The chain runs to 78 residues: Putative membrane protein insertion efficiency factor (78 aa).

The protein belongs to the UPF0161 family.

It is found in the cell membrane. Its function is as follows. Could be involved in insertion of integral membrane proteins into the membrane. This Bacillus cereus (strain G9842) protein is Putative membrane protein insertion efficiency factor.